We begin with the raw amino-acid sequence, 255 residues long: Pimeloyl-[acyl-carrier protein] methyl ester esterase (255 aa).

Residues 16 to 241 enclose the AB hydrolase-1 domain; that stretch reads LVLLHGWGLN…AAHAPFISHP (226 aa). Residues Trp22, 81–82, and 142–146 contribute to the substrate site; these read SL and FLALQ. Ser81 (nucleophile) is an active-site residue. Active-site residues include Asp206 and His234. Residue His234 coordinates substrate.

The protein belongs to the AB hydrolase superfamily. Carboxylesterase BioH family. As to quaternary structure, monomer.

It localises to the cytoplasm. It catalyses the reaction 6-carboxyhexanoyl-[ACP] methyl ester + H2O = 6-carboxyhexanoyl-[ACP] + methanol + H(+). Its pathway is cofactor biosynthesis; biotin biosynthesis. The physiological role of BioH is to remove the methyl group introduced by BioC when the pimeloyl moiety is complete. It allows to synthesize pimeloyl-ACP via the fatty acid synthetic pathway through the hydrolysis of the ester bonds of pimeloyl-ACP esters. Also displays a weak thioesterase activity. Can form a complex with CoA, and may be involved in the condensation of CoA and pimelic acid into pimeloyl-CoA, a precursor in biotin biosynthesis. The polypeptide is Pimeloyl-[acyl-carrier protein] methyl ester esterase (Serratia marcescens).